The sequence spans 316 residues: DNA-directed RNA polymerase subunit alpha (316 aa).

The alpha N-terminal domain (alpha-NTD) stretch occupies residues 1 to 232 (MSGNDLFPST…DLFNPLHHCS (232 aa)). Residues 247–316 (KINDILVEEL…LNIYLPKEKY (70 aa)) are alpha C-terminal domain (alpha-CTD).

This sequence belongs to the RNA polymerase alpha chain family. In terms of assembly, in plastids the minimal PEP RNA polymerase catalytic core is composed of four subunits: alpha, beta, beta', and beta''. When a (nuclear-encoded) sigma factor is associated with the core the holoenzyme is formed, which can initiate transcription.

It is found in the plastid. The protein resides in the chloroplast. The enzyme catalyses RNA(n) + a ribonucleoside 5'-triphosphate = RNA(n+1) + diphosphate. Functionally, DNA-dependent RNA polymerase catalyzes the transcription of DNA into RNA using the four ribonucleoside triphosphates as substrates. This is DNA-directed RNA polymerase subunit alpha from Mesostigma viride (Green alga).